Reading from the N-terminus, the 767-residue chain is Actin filament-associated protein 1-like 1 (767 aa).

The segment covering 83–97 (LRDMSDDGERSKEAS) has biased composition (basic and acidic residues). The tract at residues 83 to 145 (LRDMSDDGER…KSPEYISSHN (63 aa)) is disordered. S87, S93, S97, S103, and S152 each carry phosphoserine. The span at 164–173 (SYPTTRMNGE) shows a compositional bias: polar residues. The tract at residues 164 to 210 (SYPTTRMNGESKSSYNDSDAMSSSYESYDEEEEEEKGRQPKHQWPSE) is disordered. Low complexity predominate over residues 174–189 (SKSSYNDSDAMSSSYE). One can recognise a PH 1 domain in the interval 219-315 (DCRICAFLLR…WLKVIREVSR (97 aa)). 2 positions are modified to phosphoserine: S328 and S342. Residues 341 to 381 (LSQEKQNSDSDSLGMNDSSSTLSRREACEHGKGKKNSLAEL) form a disordered region. A compositionally biased stretch (polar residues) spans 349–362 (DSDSLGMNDSSSTL). One can recognise a PH 2 domain in the interval 417 to 511 (EAPCCGYLNV…WLGLLLVEMG (95 aa)). Y556 carries the phosphotyrosine modification. A disordered region spans residues 563–605 (KVQDEEPQRPTGAQVKRHASSCSEKSHRADPQVKVKRHASSAN). Basic and acidic residues predominate over residues 586 to 595 (EKSHRADPQV). Positions 610 to 700 (GKNRAEEDAR…AVKERLQQSL (91 aa)) form a coiled coil. A disordered region spans residues 704–767 (PALGLSVSSK…KAKEWEMKKT (64 aa)). Positions 709–733 (SVSSKSKSQETTNKPQSSVPEQSLP) are enriched in polar residues. The residue at position 746 (S746) is a Phosphoserine. Residues 758-767 (KAKEWEMKKT) show a composition bias toward basic and acidic residues.

As to quaternary structure, interacts with CTTN.

It localises to the cytoplasm. It is found in the cell projection. Its subcellular location is the podosome. The protein resides in the invadopodium. May be involved in podosome and invadosome formation. This Rattus norvegicus (Rat) protein is Actin filament-associated protein 1-like 1 (Afap1l1).